The following is a 43-amino-acid chain: Hemolysin H3C (43 aa).

Met-1 carries the N-formylmethionine modification.

It belongs to the staphylococcal hemolytic protein family.

It is found in the secreted. Functionally, virulence factor. Causes hemolysis of erythrocytes from sheep (HD(50)=2.63 mM), rabbit (HD(50)=2.37 mM), guinea pig (HD(50)=1.98 mM), dog (HD(50)=1.02 mM) and human (HD(50)=2.07 mM). Acts synergistically with beta-hemolysins from S.aureus ATCC 25923. Cytotoxic towards human dermal fibroblasts. In Staphylococcus cohnii subsp. cohnii, this protein is Hemolysin H3C.